We begin with the raw amino-acid sequence, 292 residues long: AKT-interacting protein (292 aa).

The segment covering 1–11 (MNPFWSMSTSS) has biased composition (polar residues). A disordered region spans residues 1-63 (MNPFWSMSTS…TSPAPAAQST (63 aa)). Basic and acidic residues predominate over residues 14–23 (KRSEGEEKTL). Ser30 is subject to Phosphoserine. One can recognise a UBC core domain in the interval 74 to 222 (YLEYSLLAEF…VVDSVKVCTA (149 aa)).

Belongs to the ubiquitin-conjugating enzyme family. FTS subfamily. In terms of assembly, component of the FTS/Hook/FHIP complex (FHF complex), composed of AKTIP/FTS, FHIP1B, and one or more members of the Hook family of proteins HOOK1, HOOK2, and HOOK3. Interacts directly with HOOK1, HOOK2 and HOOK3. The FHF complex associates with the homotypic vesicular sorting complex (the HOPS complex). Also interacts with AKT1. May interact with FHIP1A.

The protein resides in the cytoplasm. It localises to the cell membrane. Its function is as follows. Component of the FTS/Hook/FHIP complex (FHF complex). The FHF complex may function to promote vesicle trafficking and/or fusion via the homotypic vesicular protein sorting complex (the HOPS complex). Regulates apoptosis by enhancing phosphorylation and activation of AKT1. Increases release of TNFSF6 via the AKT1/GSK3B/NFATC1 signaling cascade. FHF complex promotes the distribution of AP-4 complex to the perinuclear area of the cell. In Homo sapiens (Human), this protein is AKT-interacting protein.